A 337-amino-acid chain; its full sequence is MSEPRKLEVLRAIVEDYVHSREPVGSKALVERHHLGVSSATIRNDMAALEDEGLITAPHTSAGRIPTDKGYRLFVDQISAVKPLSQAERRAIQSLLEGSDDLDDVLDRTVRLLSQLTNQVAVVQYPHLSRALIRHIEFVLLAPRKVLVVLIANSGNVEQRVIDVGQDLADDALSALRTRFLGTLAGTPLARLAQALPAVVSSVSPGERQAAQALAHALEILAHSSREDRMVMAGTANLARSNVDFPLSIGPVLEALEEQVVMLRLLSDMAQDHRGVAVSIGRENPYDGLAEASVVATGYGPDSVAKIGILGPTRMDYPNTMAAVRAVARYLSRILGP.

The protein belongs to the HrcA family.

Functionally, negative regulator of class I heat shock genes (grpE-dnaK-dnaJ and groELS operons). Prevents heat-shock induction of these operons. In Pseudarthrobacter chlorophenolicus (strain ATCC 700700 / DSM 12829 / CIP 107037 / JCM 12360 / KCTC 9906 / NCIMB 13794 / A6) (Arthrobacter chlorophenolicus), this protein is Heat-inducible transcription repressor HrcA.